The following is an 81-amino-acid chain: Ferredoxin (81 aa).

The 4Fe-4S ferredoxin-type domain occupies 2–30 (KYTIVDKETCIACGACGAAAPDIYDYDED). Residues Cys11, Cys14, Cys17, and Cys61 each contribute to the [4Fe-4S] cluster site.

[4Fe-4S] cluster serves as cofactor.

Its function is as follows. Ferredoxins are iron-sulfur proteins that transfer electrons in a wide variety of metabolic reactions. The sequence is that of Ferredoxin from Bacillus thermoproteolyticus.